A 157-amino-acid chain; its full sequence is MSKKVTETVEQLVTPILDEMGLELVDIEYVKEGKNWFLRVFIDSDDGVDIEQCGAVSEKLSEKLDEVDPIPHNYFLEVSSPGAERPLKKAKDFAKAIGKNVYIKTYEPIEGEKQFEGELTAFDGTTVTLLVKDRGRQKTVAIPYEKVASARLAVIFF.

The protein belongs to the RimP family.

The protein localises to the cytoplasm. Its function is as follows. Required for maturation of 30S ribosomal subunits. The protein is Ribosome maturation factor RimP of Geobacillus kaustophilus (strain HTA426).